Here is a 311-residue protein sequence, read N- to C-terminus: HPr kinase/phosphorylase (311 aa).

Active-site residues include histidine 138 and lysine 159. 153–160 contacts ATP; the sequence is GSSGIGKS. Serine 160 serves as a coordination point for Mg(2+). Aspartate 177 (proton acceptor; for phosphorylation activity. Proton donor; for dephosphorylation activity) is an active-site residue. Positions 201-210 are important for the catalytic mechanism of both phosphorylation and dephosphorylation; that stretch reads LEIRGVGIIN. Glutamate 202 is a Mg(2+) binding site. Arginine 243 is a catalytic residue. The tract at residues 264–269 is important for the catalytic mechanism of dephosphorylation; it reads PVRPGR.

The protein belongs to the HPrK/P family. Homohexamer. It depends on Mg(2+) as a cofactor.

It catalyses the reaction [HPr protein]-L-serine + ATP = [HPr protein]-O-phospho-L-serine + ADP + H(+). The catalysed reaction is [HPr protein]-O-phospho-L-serine + phosphate + H(+) = [HPr protein]-L-serine + diphosphate. Its function is as follows. Catalyzes the ATP- as well as the pyrophosphate-dependent phosphorylation of a specific serine residue in HPr, a phosphocarrier protein of the phosphoenolpyruvate-dependent sugar phosphotransferase system (PTS). HprK/P also catalyzes the pyrophosphate-producing, inorganic phosphate-dependent dephosphorylation (phosphorolysis) of seryl-phosphorylated HPr (P-Ser-HPr). The two antagonistic activities of HprK/P are regulated by several intracellular metabolites, which change their concentration in response to the absence or presence of rapidly metabolisable carbon sources (glucose, fructose, etc.) in the growth medium. Therefore, by controlling the phosphorylation state of HPr, HPrK/P is a sensor enzyme that plays a major role in the regulation of carbon metabolism and sugar transport: it mediates carbon catabolite repression (CCR), and regulates PTS-catalyzed carbohydrate uptake and inducer exclusion. The protein is HPr kinase/phosphorylase of Brevibacillus brevis (strain 47 / JCM 6285 / NBRC 100599).